The primary structure comprises 298 residues: ATP synthase gamma chain (298 aa).

This sequence belongs to the ATPase gamma chain family. In terms of assembly, F-type ATPases have 2 components, CF(1) - the catalytic core - and CF(0) - the membrane proton channel. CF(1) has five subunits: alpha(3), beta(3), gamma(1), delta(1), epsilon(1). CF(0) has three main subunits: a, b and c.

It localises to the cell inner membrane. Produces ATP from ADP in the presence of a proton gradient across the membrane. The gamma chain is believed to be important in regulating ATPase activity and the flow of protons through the CF(0) complex. In Bacteroides thetaiotaomicron (strain ATCC 29148 / DSM 2079 / JCM 5827 / CCUG 10774 / NCTC 10582 / VPI-5482 / E50), this protein is ATP synthase gamma chain.